We begin with the raw amino-acid sequence, 1186 residues long: Trafficking protein particle complex II-specific subunit 120 homolog (1186 aa).

Disordered stretches follow at residues 777–824 (PTDS…EKES) and 964–984 (TKDP…SEKN). Polar residues predominate over residues 779-792 (DSDNTMSSGRNAAG). At Ser971 the chain carries Phosphoserine. Over residues 972–981 (PSSSRNPSFS) the composition is skewed to low complexity.

It belongs to the TRS120 family. As to quaternary structure, part of the multisubunit TRAPP (transport protein particle) II complex composed of BET3, BET5, TRS20, TRS23, TRS31, TRS33, TRS65, TRS85, TRS120 and TRS130. In terms of tissue distribution, expressed in roots, leaves, stems and flowers.

The protein resides in the golgi apparatus. The protein localises to the trans-Golgi network. It localises to the early endosome. In terms of biological role, specific subunit of the TRAPP II complex, a highly conserved vesicle tethering complex that is required for the proper transport of proteins in post-Golgi trafficking pathways to the growing cell plate in mitotic active cells. Required for the polarized and selective transport of PIN2 and probably PIN1 to the plasma membrane. Not required for ER-to-Golgi as well as biosynthetic and endocytic vacuolar transport. The protein is Trafficking protein particle complex II-specific subunit 120 homolog of Arabidopsis thaliana (Mouse-ear cress).